The following is a 1590-amino-acid chain: von Willebrand factor D and EGF domain-containing protein (1590 aa).

The signal sequence occupies residues 1–20 (MPGGACVLVIALMFLAWGEA). Asparagine 367 carries N-linked (GlcNAc...) asparagine glycosylation. Residues 423 to 606 (AYCYTFTDPH…EWRILPGKSM (184 aa)) form the VWFD domain. 2 cysteine pairs are disulfide-bonded: cysteine 425–cysteine 565 and cysteine 468–cysteine 477. N-linked (GlcNAc...) asparagine glycosylation is found at asparagine 703 and asparagine 968. The 40-residue stretch at 1177 to 1216 (TVKSCDCLNGGSCVSDRNFSPGSGVYLCVCLPGFHGSLCE) folds into the EGF-like 1 domain. 3 cysteine pairs are disulfide-bonded: cysteine 1181–cysteine 1189, cysteine 1183–cysteine 1204, and cysteine 1206–cysteine 1215. A compositionally biased stretch (basic and acidic residues) spans 1268 to 1280 (DKSVNKEEDDKNA). The segment at 1268–1288 (DKSVNKEEDDKNAQGRKRHVK) is disordered. EGF-like domains lie at 1294–1326 (AFTI…SNCQ), 1358–1390 (DEEH…PRCE), 1422–1454 (STAL…EHCQ), 1455–1486 (NAFC…RRFQ), 1518–1550 (NTPI…VRCQ), and 1551–1582 (IPIC…VKCE). Intrachain disulfides connect cysteine 1298–cysteine 1308, cysteine 1302–cysteine 1314, cysteine 1316–cysteine 1325, cysteine 1362–cysteine 1372, cysteine 1366–cysteine 1378, cysteine 1380–cysteine 1389, cysteine 1426–cysteine 1436, cysteine 1430–cysteine 1442, cysteine 1444–cysteine 1453, cysteine 1458–cysteine 1468, cysteine 1462–cysteine 1474, cysteine 1522–cysteine 1532, cysteine 1526–cysteine 1538, cysteine 1540–cysteine 1549, cysteine 1554–cysteine 1564, cysteine 1558–cysteine 1570, and cysteine 1572–cysteine 1581.

The protein resides in the secreted. This chain is von Willebrand factor D and EGF domain-containing protein (VWDE), found in Homo sapiens (Human).